Here is a 293-residue protein sequence, read N- to C-terminus: N-acetylneuraminate lyase (293 aa).

Ser-48 and Ser-49 together coordinate aceneuramate. Tyr-137 serves as the catalytic Proton donor. Catalysis depends on Lys-165, which acts as the Schiff-base intermediate with substrate. Aceneuramate-binding residues include Thr-167, Gly-189, Asp-191, Glu-192, and Ser-208.

It belongs to the DapA family. NanA subfamily. As to quaternary structure, homotetramer.

The protein localises to the cytoplasm. It carries out the reaction aceneuramate = aldehydo-N-acetyl-D-mannosamine + pyruvate. The protein operates within amino-sugar metabolism; N-acetylneuraminate degradation; D-fructose 6-phosphate from N-acetylneuraminate: step 1/5. Catalyzes the reversible aldol cleavage of N-acetylneuraminic acid (sialic acid; Neu5Ac) to form pyruvate and N-acetylmannosamine (ManNAc) via a Schiff base intermediate. The sequence is that of N-acetylneuraminate lyase from Staphylococcus carnosus (strain TM300).